The following is a 236-amino-acid chain: Small ribosomal subunit protein uS2c (236 aa).

It belongs to the universal ribosomal protein uS2 family.

The protein resides in the plastid. The protein localises to the chloroplast. The protein is Small ribosomal subunit protein uS2c (rps2) of Manihot esculenta (Cassava).